A 239-amino-acid chain; its full sequence is U-scoloptoxin(11)-Sm3a (239 aa).

The first 16 residues, 1–16 (MINFLLLVLILSVLES), serve as a signal peptide directing secretion.

The protein belongs to the scoloptoxin-11 family. Post-translationally, contains 9 disulfide bonds. In terms of tissue distribution, expressed by the venom gland.

It is found in the secreted. The sequence is that of U-scoloptoxin(11)-Sm3a from Scolopendra morsitans (Tanzanian blue ringleg centipede).